Reading from the N-terminus, the 218-residue chain is Probable transaldolase (218 aa).

Lys-84 serves as the catalytic Schiff-base intermediate with substrate.

Belongs to the transaldolase family. Type 3B subfamily.

Its subcellular location is the cytoplasm. The enzyme catalyses D-sedoheptulose 7-phosphate + D-glyceraldehyde 3-phosphate = D-erythrose 4-phosphate + beta-D-fructose 6-phosphate. It functions in the pathway carbohydrate degradation; pentose phosphate pathway; D-glyceraldehyde 3-phosphate and beta-D-fructose 6-phosphate from D-ribose 5-phosphate and D-xylulose 5-phosphate (non-oxidative stage): step 2/3. Its function is as follows. Transaldolase is important for the balance of metabolites in the pentose-phosphate pathway. This Sulfurihydrogenibium sp. (strain YO3AOP1) protein is Probable transaldolase.